The chain runs to 392 residues: Cyclic di-GMP phosphodiesterase RocR (392 aa).

Positions 5-126 (NVLVLEDEPF…RITALLTRYN (122 aa)) constitute a Response regulatory domain. Asp-56 is subject to 4-aspartylphosphate. Residues 140-392 (ELPSVADVVR…QHFLDYCSGS (253 aa)) enclose the EAL domain. The Mg(2+) site is built by Glu-175, Asn-233, Glu-265, and Asp-295. Glu-352 acts as the Proton acceptor in catalysis.

As to quaternary structure, homotetramer. Exhibits a highly unusual tetrameric structure arranged around a single dyad, with the four subunits adopting two distinctly different conformations, with only two active sites accessible for substrate binding. Interacts with RocS1. Mg(2+) is required as a cofactor.

The enzyme catalyses 3',3'-c-di-GMP + H2O = 5'-phosphoguanylyl(3'-&gt;5')guanosine + H(+). With respect to regulation, phosphorylation of Asp-56 probably induces local conformational changes in the response regulatory domain. These structural changes are transmitted to the adjacent EAL domain, then the signal is further transmitted down to the active site. The phosphodiesterase activity is inhibited by Ca(2+) and Zn(2+). Phosphodiesterase activity is inhibited by a benzoisothiazolinone derivative that specifically inhibited RocR, but not some other phosphodiesterases. Its function is as follows. Phosphodiesterase (PDE) that catalyzes the hydrolysis of cyclic diguanylate (c-di-GMP) to 5'-pGpG. Cannot use cyclic AMP or cyclic GMP. Part of the RocSAR two-component regulatory signaling system (also known as the SadARS system), which regulates biofilm maturation, type III secretion and expression of the cup fimbrial-gene cluster. Negatively regulates the expression of cup genes by antagonizing the activity of RocA1. The polypeptide is Cyclic di-GMP phosphodiesterase RocR (Pseudomonas aeruginosa (strain ATCC 15692 / DSM 22644 / CIP 104116 / JCM 14847 / LMG 12228 / 1C / PRS 101 / PAO1)).